We begin with the raw amino-acid sequence, 555 residues long: Formate--tetrahydrofolate ligase (555 aa).

65-72 lines the ATP pocket; the sequence is TPAGEGKS.

The protein belongs to the formate--tetrahydrofolate ligase family.

It catalyses the reaction (6S)-5,6,7,8-tetrahydrofolate + formate + ATP = (6R)-10-formyltetrahydrofolate + ADP + phosphate. The protein operates within one-carbon metabolism; tetrahydrofolate interconversion. This Staphylococcus aureus (strain USA300) protein is Formate--tetrahydrofolate ligase.